Reading from the N-terminus, the 211-residue chain is 2,3-bisphosphoglycerate-dependent phosphoglycerate mutase (211 aa).

Substrate contacts are provided by residues arginine 9–asparagine 16, threonine 22–glycine 23, arginine 61, glutamate 88–tyrosine 91, lysine 99, arginine 115–arginine 116, and glycine 159–asparagine 160. Catalysis depends on histidine 10, which acts as the Tele-phosphohistidine intermediate. Glutamate 88 (proton donor/acceptor) is an active-site residue.

This sequence belongs to the phosphoglycerate mutase family. BPG-dependent PGAM subfamily. As to quaternary structure, homodimer.

The catalysed reaction is (2R)-2-phosphoglycerate = (2R)-3-phosphoglycerate. Its pathway is carbohydrate degradation; glycolysis; pyruvate from D-glyceraldehyde 3-phosphate: step 3/5. Catalyzes the interconversion of 2-phosphoglycerate and 3-phosphoglycerate. This chain is 2,3-bisphosphoglycerate-dependent phosphoglycerate mutase, found in Allorhizobium ampelinum (strain ATCC BAA-846 / DSM 112012 / S4) (Agrobacterium vitis (strain S4)).